The sequence spans 567 residues: ERO1-like protein 2 (567 aa).

The signal sequence occupies residues 1–22; it reads MKIAKGLVGLLILYKNVCQVLC. N-linked (GlcNAc...) asparagine glycosylation occurs at Asn49. 4 disulfide bridges follow: Cys88–Cys386, Cys98–Cys103, Cys154–Cys325, and Cys389–Cys392. Residues Arg188, Thr190, Trp201, Ser258, His261, and Lys290 each coordinate FAD. The Nucleophile role is filled by Cys389. The active site involves Cys392. An N-linked (GlcNAc...) asparagine glycan is attached at Asn546.

Belongs to the EROs family. As to quaternary structure, may function both as a monomer and a homodimer. Requires FAD as cofactor. N-glycosylated.

The protein localises to the endoplasmic reticulum membrane. In terms of biological role, essential oxidoreductase that oxidizes proteins in the endoplasmic reticulum to produce disulfide bonds. Acts by oxidizing directly pdi1 isomerase through a direct disulfide exchange. Does not act as a direct oxidant of folding substrate, but relies on pdi1 to transfer oxidizing equivalent. Does not oxidize all pdi related proteins, suggesting that it can discriminate between pdi1 and related proteins. Its reoxidation probably involves electron transfer to molecular oxygen via FAD. Acts independently of glutathione. May be responsible for a significant proportion of reactive oxygen species (ROS) in the cell, thereby being a source of oxidative stress. The chain is ERO1-like protein 2 (ero12) from Schizosaccharomyces pombe (strain 972 / ATCC 24843) (Fission yeast).